Consider the following 653-residue polypeptide: Sodium-dependent nutrient amino acid transporter 1 (653 aa).

The tract at residues 1–55 is disordered; sequence MELKGVHQQNGTSNGTGAAGTEGESPPPAPAPATAEAAASLETTTEKVDAEQQKT. Topologically, residues 1–59 are cytoplasmic; it reads MELKGVHQQNGTSNGTGAAGTEGESPPPAPAPATAEAAASLETTTEKVDAEQQKTERTN. Low complexity-rich tracts occupy residues 10 to 24 and 32 to 43; these read NGTS…TEGE and PATAEAAASLET. Residues 44–55 are compositionally biased toward basic and acidic residues; that stretch reads TTEKVDAEQQKT. The next 4 membrane-spanning stretches (helical) occupy residues 60–80, 93–113, 125–145, and 146–166; these read WGNG…LGNV, GAFL…MYYL, TVKI…QAFA, and TICI…YLFV. 2 N-linked (GlcNAc...) asparagine glycosylation sites follow: N202 and N205. 9 helical membrane passes run 241 to 261, 270 to 290, 319 to 339, 353 to 373, 413 to 433, 459 to 479, 486 to 506, 528 to 548, and 565 to 585; these read PDWK…LVIM, AAYF…VRAV, AVVQ…MFAS, IVTT…FAIL, LFSV…IVAL, ICGF…ILTL, TYVV…IYGM, CWSF…MVTI, and AGWL…MWYI.

It belongs to the sodium:neurotransmitter symporter (SNF) (TC 2.A.22) family.

Its subcellular location is the membrane. In terms of biological role, unusual broad substrate spectrum amino acid:sodium cotransporter that promotes absorption of the D isomers of essential amino acids. Neutral amino acids are the preferred substrates, especially methionine and phenylalanine. This Drosophila pseudoobscura pseudoobscura (Fruit fly) protein is Sodium-dependent nutrient amino acid transporter 1.